Here is a 287-residue protein sequence, read N- to C-terminus: MTSAQKPVFSPSDLQTWLEIATEAVLAAGAEIFSLWGKVQQIQEKGRAGDLVTEADRQAEAIILEIIKRRCPDHAILAEESGQLGQVDNPFCWAIDPLDGTTNFAHSYPVSCVSIGLLIQDIPTVGVVYNPFRQELFRAATSLGATLNRRPIQVSTTASLDKSLLVTGFAYDRVKTLDNNYPEFCYLTHLTQGVRRSGSAAIDLIDVACGRLDGYWERGINPWDMAAGIVIVREAGGIVSAYDCSPLDLSTGRILATNGKIHQELSQALAATPQWFQQYAAARAQKI.

Residues E79, D96, L98, and D99 each coordinate Mg(2+). A substrate-binding site is contributed by E79. Substrate-binding positions include 98 to 101 (LDGT), R195, and D224. D224 contacts Mg(2+).

The protein belongs to the inositol monophosphatase superfamily. Requires Mg(2+) as cofactor.

The enzyme catalyses a myo-inositol phosphate + H2O = myo-inositol + phosphate. In Synechocystis sp. (strain ATCC 27184 / PCC 6803 / Kazusa), this protein is Inositol-1-monophosphatase (suhB).